Reading from the N-terminus, the 816-residue chain is uncharacterized protein (816 aa).

Disordered regions lie at residues M1–S34, R65–N101, D154–E406, and R770–A816. A compositionally biased stretch (low complexity) spans N18–Q32. A compositionally biased stretch (polar residues) spans V83–Q92. The segment covering T161 to T223 has biased composition (low complexity). Residues E246–I260 show a composition bias toward polar residues. S286 is modified (phosphoserine). Over residues D292–E316 the composition is skewed to basic and acidic residues. Residues A317–E326 show a composition bias toward acidic residues. The span at Q327–T342 shows a compositional bias: low complexity. A phosphoserine mark is found at S343 and S347. A compositionally biased stretch (acidic residues) spans S343–P353. Positions K380–S396 are enriched in low complexity. 2 stretches are compositionally biased toward basic and acidic residues: residues R770 to Q792 and P799 to A816. A Phosphothreonine modification is found at T809.

Post-translationally, pyrophosphorylated by 5-diphosphoinositol pentakisphosphate (5-IP7). Serine pyrophosphorylation is achieved by Mg(2+)-dependent, but enzyme independent transfer of a beta-phosphate from a inositol pyrophosphate to a pre-phosphorylated serine residue.

This is an uncharacterized protein from Saccharomyces cerevisiae (strain ATCC 204508 / S288c) (Baker's yeast).